The chain runs to 492 residues: Ketol-acid reductoisomerase (NADP(+)) (492 aa).

A KARI N-terminal Rossmann domain is found at 17–208; it reads LGVCEFMDRS…GGDRAGVLKS (192 aa). NADP(+) is bound by residues 45–48, arginine 68, arginine 76, serine 78, and 108–110; these read CGAQ and DKQ. The active site involves histidine 132. NADP(+) is bound at residue glycine 158. KARI C-terminal knotted domains follow at residues 209 to 353 and 354 to 487; these read SFVA…AEQE and YYDN…MTEM. Residues aspartate 217, glutamate 221, glutamate 389, and glutamate 393 each contribute to the Mg(2+) site. Serine 414 is a binding site for substrate.

It belongs to the ketol-acid reductoisomerase family. Requires Mg(2+) as cofactor.

It carries out the reaction (2R)-2,3-dihydroxy-3-methylbutanoate + NADP(+) = (2S)-2-acetolactate + NADPH + H(+). The catalysed reaction is (2R,3R)-2,3-dihydroxy-3-methylpentanoate + NADP(+) = (S)-2-ethyl-2-hydroxy-3-oxobutanoate + NADPH + H(+). It participates in amino-acid biosynthesis; L-isoleucine biosynthesis; L-isoleucine from 2-oxobutanoate: step 2/4. It functions in the pathway amino-acid biosynthesis; L-valine biosynthesis; L-valine from pyruvate: step 2/4. Functionally, involved in the biosynthesis of branched-chain amino acids (BCAA). Catalyzes an alkyl-migration followed by a ketol-acid reduction of (S)-2-acetolactate (S2AL) to yield (R)-2,3-dihydroxy-isovalerate. In the isomerase reaction, S2AL is rearranged via a Mg-dependent methyl migration to produce 3-hydroxy-3-methyl-2-ketobutyrate (HMKB). In the reductase reaction, this 2-ketoacid undergoes a metal-dependent reduction by NADPH to yield (R)-2,3-dihydroxy-isovalerate. This Cytophaga hutchinsonii (strain ATCC 33406 / DSM 1761 / CIP 103989 / NBRC 15051 / NCIMB 9469 / D465) protein is Ketol-acid reductoisomerase (NADP(+)).